Here is an 803-residue protein sequence, read N- to C-terminus: MAKRSSLYIRIVEGKNLPAKDITGSSDPYCIVKVDNEPIIRTATVWKTLCPFWGEEYQVHLPPTFHAVAFYVMDEDALSRDDVIGKVCLTRDTIASHPKGFSGWAHLTEVDPDEEVQGEIHLRLEVWPGARACRLRCSVLEARDLAPKDRNGTSDPFVRVRYKGRTRETSIVKKSCYPRWNETFEFELQEGAMEALCVEAWDWDLVSRNDFLGKVVIDVQRLRVVQQEEGWFRLQPDQSKSRRHDEGNLGSLQLEVRLRDETVLPSSYYQPLVHLLCHEVKLGMQGPGQLIPLIEETTSTECRQDVATNLLKLFLGQGLAKDFLDLLFQLELSRTSETNTLFRSNSLASKSMESFLKVAGMQYLHGVLGPIINKVFEEKKYVELDPSKVEVKDVGCSGLHRPQTEAEVLEQSAQTLRAHLGALLSALSRSVRACPAVVRATFRQLFRRVRERFPGAQHENVPFIAVTSFLCLRFFSPAIMSPKLFHLRERHADARTSRTLLLLAKAVQNVGNMDTPASRAKEAWMEPLQPTVRQGVAQLKDFITKLVDIEEKDELDLQRTLSLQAPPVKEGPLFIHRTKGKGPLMSSSFKKLYFSLTTEALSFAKTPSSKKSALIKLANIRAAEKVEEKSFGGSHVMQVIYTDDAGRPQTAYLQCKCVNELNQWLSALRKVSINNTGLLGSYHPGVFRGDKWSCCHQKEKTGQGCDKTRSRVTLQEWNDPLDHDLEAQLIYRHLLGVEAMLWERHRELSGGAEAGTVPTSPGKVPEDSLARLLRVLQDLREAHSSSPAGSPPSEPNCLLELQT.

C2 domains follow at residues 1–105 (MAKR…SGWA) and 116–232 (VQGE…EGWF). Asp-21, Asp-27, Asp-74, Asp-76, Ser-79, Asp-82, Asp-149, Asp-155, Asp-202, Asp-204, Ser-207, and Asp-210 together coordinate Ca(2+). Positions 318 to 546 (GLAKDFLDLL…AQLKDFITKL (229 aa)) constitute a Ras-GAP domain. One can recognise a PH domain in the interval 566 to 673 (PPVKEGPLFI…WLSALRKVSI (108 aa)). The Btk-type zinc finger occupies 675–711 (NTGLLGSYHPGVFRGDKWSCCHQKEKTGQGCDKTRSR). His-683, Cys-694, Cys-695, and Cys-705 together coordinate Zn(2+). A disordered region spans residues 781–803 (EAHSSSPAGSPPSEPNCLLELQT).

Ca(2+) is required as a cofactor. In terms of tissue distribution, widely expressed.

Its subcellular location is the cytoplasm. It localises to the cytosol. The protein localises to the cell membrane. Ca(2+)-dependent Ras GTPase-activating protein, that switches off the Ras-MAPK pathway following a stimulus that elevates intracellular calcium. Functions as an adaptor for Cdc42 and Rac1 during FcR-mediated phagocytosis. The protein is Ras GTPase-activating protein 4 (RASA4) of Homo sapiens (Human).